The following is a 150-amino-acid chain: Large ribosomal subunit protein bL9 (150 aa).

This sequence belongs to the bacterial ribosomal protein bL9 family.

Functionally, binds to the 23S rRNA. The chain is Large ribosomal subunit protein bL9 from Burkholderia vietnamiensis (strain G4 / LMG 22486) (Burkholderia cepacia (strain R1808)).